Here is a 160-residue protein sequence, read N- to C-terminus: MTAAVPNARLVDVELDESIGRSTPDVEHERAVAIFDLIEENSFHPIGDDTGGPYRLKLSLMESRLIFAITREAGEDVATHILSLTPLRRVVRDYFMICESYYQAIRSATPSKIEAIDMGRRGLHNEGSQTLQNRLQGKIEVDFNTARRLFTLVCVLHWRG.

Belongs to the UPF0262 family.

This is UPF0262 protein Oant_0325 from Brucella anthropi (strain ATCC 49188 / DSM 6882 / CCUG 24695 / JCM 21032 / LMG 3331 / NBRC 15819 / NCTC 12168 / Alc 37) (Ochrobactrum anthropi).